The chain runs to 280 residues: Borealin (280 aa).

The tract at residues 1–58 (MAPRKGSSRVAKTNSLRRRKLASFLKDFDREVEIRIKQIESDRQNLLKEVDNLYNIEI) is required for interaction with INCENP. Residues 1–88 (MAPRKGSSRV…NKQALEEAAT (88 aa)) are required for centromere localization. Residues 1–140 (MAPRKGSSRV…ENERKNLQTA (140 aa)) form a required for interaction with SENP3 region. A required to form a minimal CPC core complex that localizes to the central spindle and midbody and properly executes the role of the CPC during cytokinesis region spans residues 10 to 109 (VAKTNSLRRR…TAEAIQTPLK (100 aa)). The segment at 20-78 (KLASFLKDFDREVEIRIKQIESDRQNLLKEVDNLYNIEILRLPKALREMNWLDYFALGG) is required for interaction with INCENP and BIRC5. Phosphothreonine; by TTK is present on residues Thr88 and Thr94. Thr106 bears the Phosphothreonine mark. Ser110 bears the Phosphoserine mark. Residues 130–169 (EENERKNLQTARVKRCPPSKKRTQSIQGKGKGKRSSRANT) are disordered. Lys135 is covalently cross-linked (Glycyl lysine isopeptide (Lys-Gly) (interchain with G-Cter in SUMO2)). The span at 141–152 (RVKRCPPSKKRT) shows a compositional bias: basic residues. The residue at position 165 (Ser165) is a Phosphoserine; by AURKB. Thr169 carries the post-translational modification Phosphothreonine; by TTK. Phosphothreonine is present on residues Thr189 and Thr204. Residues Ser219 and Ser224 each carry the phosphoserine modification. Position 230 is a phosphothreonine; by TTK (Thr230). Phosphoserine occurs at positions 238 and 244.

It belongs to the borealin family. As to quaternary structure, may form homooligomers and homodimers. Component of the chromosomal passenger complex (CPC) composed of at least BIRC5/survivin, CDCA8/borealin, INCENP, AURKB or AURKC; in the complex forms a triple-helix bundle-based subcomplex with INCENP and BIRC5. Interacts with SENP3, UBE2I and RANBP2. Interacts (phosphorylated) with SGO1 and SGO2; the association is dependent on CDK1. Post-translationally, phosphorylated by TTK, essentially at Thr-88, Thr94, Thr-169 and Thr-230. Phosphorylation (probably by CDK1) promotes targeting of the CPC to centromeric DNA. In terms of processing, sumoylated by UBE2I and RANBP2. Desumoylated by SENP3 through the removal of SUMO2 and SUMO3.

The protein localises to the nucleus. It localises to the nucleolus. Its subcellular location is the cytoplasm. It is found in the chromosome. The protein resides in the centromere. The protein localises to the cytoskeleton. It localises to the spindle. Component of the chromosomal passenger complex (CPC), a complex that acts as a key regulator of mitosis. The CPC complex has essential functions at the centromere in ensuring correct chromosome alignment and segregation and is required for chromatin-induced microtubule stabilization and spindle assembly. In the complex, it may be required to direct the CPC to centromeric DNA. In Pongo abelii (Sumatran orangutan), this protein is Borealin (CDCA8).